We begin with the raw amino-acid sequence, 207 residues long: Putative 3-methyladenine DNA glycosylase (207 aa).

Belongs to the DNA glycosylase MPG family.

The protein is Putative 3-methyladenine DNA glycosylase of Burkholderia cenocepacia (strain HI2424).